Here is a 302-residue protein sequence, read N- to C-terminus: Tyrosine--tRNA ligase 2 (302 aa).

Tyr-33 serves as a coordination point for L-tyrosine. Positions 38 to 47 match the 'HIGH' region motif; that stretch reads PTADSLHLGH. L-tyrosine contacts are provided by Tyr-160 and Gln-164. The short motif at 220 to 224 is the 'KMSKS' region element; sequence KFGKS. Lys-223 is an ATP binding site.

Belongs to the class-I aminoacyl-tRNA synthetase family. TyrS type 1 subfamily. Homodimer.

Its subcellular location is the cytoplasm. The enzyme catalyses tRNA(Tyr) + L-tyrosine + ATP = L-tyrosyl-tRNA(Tyr) + AMP + diphosphate + H(+). Its function is as follows. Catalyzes the attachment of tyrosine to tRNA(Tyr) in a two-step reaction: tyrosine is first activated by ATP to form Tyr-AMP and then transferred to the acceptor end of tRNA(Tyr). This Streptococcus thermophilus (strain CNRZ 1066) protein is Tyrosine--tRNA ligase 2 (tyrS2).